The following is a 599-amino-acid chain: Serine hydroxymethyltransferase 6 (599 aa).

The disordered stretch occupies residues 1–25 (MDRIAQSDLSLGFGSSHALPLPHPP). Lysine 374 bears the N6-(pyridoxal phosphate)lysine mark.

This sequence belongs to the SHMT family. As to quaternary structure, homotetramer. Pyridoxal 5'-phosphate is required as a cofactor.

It localises to the cytoplasm. It carries out the reaction (6R)-5,10-methylene-5,6,7,8-tetrahydrofolate + glycine + H2O = (6S)-5,6,7,8-tetrahydrofolate + L-serine. Its pathway is one-carbon metabolism; tetrahydrofolate interconversion. Functionally, catalyzes the interconversion of serine and glycine. The polypeptide is Serine hydroxymethyltransferase 6 (SHM6) (Arabidopsis thaliana (Mouse-ear cress)).